The primary structure comprises 519 residues: Circadian clock oscillator protein KaiC (519 aa).

KaiC domains are found at residues 1-246 (MSEK…VNIF) and 260-519 (VRVS…GSDS). The ATP site is built by glycine 48, threonine 49, glycine 50, lysine 51, threonine 52, leucine 53, lysine 223, leucine 224, arginine 225, threonine 227, histidine 229, threonine 239, threonine 289, glycine 290, threonine 291, glycine 292, lysine 293, threonine 294, and leucine 295. Threonine 52 serves as a coordination point for Mg(2+). Threonine 294 contributes to the Mg(2+) binding site. Glutamate 317 contacts Mg(2+). Tryptophan 330 contacts ATP. Serine 430 carries the post-translational modification Phosphoserine; by autocatalysis. Threonine 431 carries the phosphothreonine; by autocatalysis modification. 7 residues coordinate ATP: arginine 450, lysine 456, methionine 457, arginine 458, serine 460, histidine 462, and lysine 464.

It belongs to the KaiC family. In terms of assembly, homohexamer; hexamerization is dependent on ATP-binding. The KaiABC complex composition changes during the circadian cycle to control KaiC phosphorylation. Complexes KaiC(6), KaiA(2-4):KaiC(6), KaiB(6):KaiC(6) and KaiC(6):KaiB(6):KaiA(12) are among the most important forms, many form cooperatively. KaiC interacts with SasA, activating its autokinase function and leading to RpaA activation. It depends on Mg(2+) as a cofactor. In terms of processing, phosphorylated on serine and threonine residues by autocatalysis. Has a 4 step phosphorylation cycle; the autokinase acts first on Thr-431, then Ser-430. When Ser-430 is modified KaiC switches to an autophosphatase mode, acting first on phospho-Thr-431 then phospho-Ser-430.

It carries out the reaction L-seryl-[protein] + ATP = O-phospho-L-seryl-[protein] + ADP + H(+). It catalyses the reaction L-threonyl-[protein] + ATP = O-phospho-L-threonyl-[protein] + ADP + H(+). The enzyme catalyses ATP + H2O = ADP + phosphate + H(+). Its activity is regulated as follows. The interaction with KaiA enhances its phosphorylation status, while the interaction with KaiB decreases it. In terms of biological role, central component of the KaiABC oscillator complex, which constitutes the main circadian regulator in cyanobacteria. Complex composition changes during the circadian cycle to control KaiC phosphorylation. KaiA stimulates KaiC autophosphorylation, while KaiB sequesters KaiA, leading to KaiC autodephosphorylation. Clock output pathways impact the RpaA transcriptional regulator. KaiC enhances the autophosphorylation activity of SasA, which then transfers its phosphate group to RpaA to activate it. KaiB and KaiC together enhance the phospho-RpaA dephosphatase activity of CikA. Functionally, has a weak, temperature-independent ATPase activity; ATPase activity defines the circadian period. The phosphorylation state of KaiC modulates its ATPase activity and effects KaiB binding. The sequence is that of Circadian clock oscillator protein KaiC from Nostoc sp. (strain PCC 7120 / SAG 25.82 / UTEX 2576).